A 94-amino-acid chain; its full sequence is Acylphosphatase (94 aa).

The Acylphosphatase-like domain occupies 8–94 (RFTARVVGRV…QGDLADFRRK (87 aa)). Active-site residues include R23 and N41.

The protein belongs to the acylphosphatase family.

The enzyme catalyses an acyl phosphate + H2O = a carboxylate + phosphate + H(+). The protein is Acylphosphatase (acyP) of Frankia alni (strain DSM 45986 / CECT 9034 / ACN14a).